We begin with the raw amino-acid sequence, 376 residues long: TraB domain-containing protein (376 aa).

Position 1 is an N-acetylmethionine (Met-1). Residue Thr-64 is modified to Phosphothreonine.

This chain is TraB domain-containing protein (Trabd), found in Mus musculus (Mouse).